Here is a 315-residue protein sequence, read N- to C-terminus: Ribose-phosphate pyrophosphokinase (315 aa).

Residues 37 to 39 and 96 to 97 contribute to the ATP site; these read DGE and RQ. The Mg(2+) site is built by His131 and Asp171. Lys195 is a catalytic residue. Residues Arg197, Asp221, and 225–229 contribute to the D-ribose 5-phosphate site; that span reads DTGGT.

This sequence belongs to the ribose-phosphate pyrophosphokinase family. Class I subfamily. As to quaternary structure, homohexamer. Requires Mg(2+) as cofactor.

The protein localises to the cytoplasm. The catalysed reaction is D-ribose 5-phosphate + ATP = 5-phospho-alpha-D-ribose 1-diphosphate + AMP + H(+). It participates in metabolic intermediate biosynthesis; 5-phospho-alpha-D-ribose 1-diphosphate biosynthesis; 5-phospho-alpha-D-ribose 1-diphosphate from D-ribose 5-phosphate (route I): step 1/1. Functionally, involved in the biosynthesis of the central metabolite phospho-alpha-D-ribosyl-1-pyrophosphate (PRPP) via the transfer of pyrophosphoryl group from ATP to 1-hydroxyl of ribose-5-phosphate (Rib-5-P). The protein is Ribose-phosphate pyrophosphokinase of Pasteurella multocida (strain Pm70).